The following is a 379-amino-acid chain: Very late expression factor 1 (379 aa).

One can recognise a Tyr recombinase domain in the interval 169-348; the sequence is VIDTILNFIN…YNIGLDETSS (180 aa). Residues Arg210, Lys239, Arg303, and His326 contribute to the active site. The active-site O-(3'-phospho-DNA)-tyrosine intermediate is the Tyr335. Over residues 346-358 the composition is skewed to acidic residues; that stretch reads TSSEEENNNDDDD. The interval 346-379 is disordered; sequence TSSEEENNNDDDDAQHNRNSSGSSGESLLYYRNE. Residues 362-379 are compositionally biased toward low complexity; sequence NRNSSGSSGESLLYYRNE.

Belongs to the 'phage' integrase family.

Functionally, plays a role in nucleocapsid assembly and serves an essential function during the final stages of the DNA packaging process. Participates in the processing of branched DNA molecules at the late stages of viral genome replication. This chain is Very late expression factor 1 (VLF-1), found in Lepidoptera (butterflies and moths).